Here is a 399-residue protein sequence, read N- to C-terminus: LIM/homeobox protein Lhx5 (399 aa).

LIM zinc-binding domains are found at residues 3–61 and 62–125; these read VHCA…RRFG and TKCA…ASAI. 2 disordered regions span residues 136–185 and 301–399; these read CTDR…GPRT and PSSQ…NTVW. Positions 151–167 are enriched in basic and acidic residues; it reads DDTKETDNSTSSDKDTN. Positions 180 to 239 form a DNA-binding region, homeobox; the sequence is RRGPRTTIKAKQLETLKAAFVATPKPTRHIREQLAQETGLNMRVIQVWFQNRRSKERRMK.

The protein localises to the nucleus. In terms of biological role, probably involved in the patterning of the nervous system, in particular in the early specification of the diencephalon. The chain is LIM/homeobox protein Lhx5 (lhx5) from Danio rerio (Zebrafish).